The primary structure comprises 121 residues: Ribonuclease P protein component (121 aa).

It belongs to the RnpA family. Consists of a catalytic RNA component (M1 or rnpB) and a protein subunit.

It carries out the reaction Endonucleolytic cleavage of RNA, removing 5'-extranucleotides from tRNA precursor.. Its function is as follows. RNaseP catalyzes the removal of the 5'-leader sequence from pre-tRNA to produce the mature 5'-terminus. It can also cleave other RNA substrates such as 4.5S RNA. The protein component plays an auxiliary but essential role in vivo by binding to the 5'-leader sequence and broadening the substrate specificity of the ribozyme. The chain is Ribonuclease P protein component from Erythrobacter litoralis (strain HTCC2594).